A 429-amino-acid polypeptide reads, in one-letter code: Adenylosuccinate synthetase (429 aa).

GTP-binding positions include 12–18 (GDEGKGK) and 40–42 (GHT). Aspartate 13 acts as the Proton acceptor in catalysis. Positions 13 and 40 each coordinate Mg(2+). IMP contacts are provided by residues 13 to 16 (DEGK), 38 to 41 (NAGH), threonine 128, arginine 142, glutamine 223, and arginine 302. Residue histidine 41 is the Proton donor of the active site. 298 to 304 (TVTGRPR) is a substrate binding site. GTP is bound by residues arginine 304, 330–332 (LLD), and 412–414 (SVG).

The protein belongs to the adenylosuccinate synthetase family. As to quaternary structure, homodimer. Mg(2+) serves as cofactor.

It localises to the cytoplasm. It carries out the reaction IMP + L-aspartate + GTP = N(6)-(1,2-dicarboxyethyl)-AMP + GDP + phosphate + 2 H(+). The protein operates within purine metabolism; AMP biosynthesis via de novo pathway; AMP from IMP: step 1/2. In terms of biological role, plays an important role in the de novo pathway of purine nucleotide biosynthesis. Catalyzes the first committed step in the biosynthesis of AMP from IMP. The chain is Adenylosuccinate synthetase from Lactobacillus delbrueckii subsp. bulgaricus (strain ATCC 11842 / DSM 20081 / BCRC 10696 / JCM 1002 / NBRC 13953 / NCIMB 11778 / NCTC 12712 / WDCM 00102 / Lb 14).